Reading from the N-terminus, the 163-residue chain is Meiotically up-regulated gene 109 protein (163 aa).

4 consecutive transmembrane segments (helical) span residues Y61–W78, A82–I104, Y114–G134, and L136–Y156.

It is found in the membrane. Functionally, has a role in meiosis. The sequence is that of Meiotically up-regulated gene 109 protein (mug109) from Schizosaccharomyces pombe (strain 972 / ATCC 24843) (Fission yeast).